The primary structure comprises 43 residues: SPbeta prophage-derived uncharacterized protein YotD (43 aa).

In Bacillus subtilis (strain 168), this protein is SPbeta prophage-derived uncharacterized protein YotD (yotD).